A 2212-amino-acid polypeptide reads, in one-letter code: Voltage-dependent P/Q-type calcium channel subunit alpha-1A (2212 aa).

Residues 1–100 (MARFGDEMPG…KYAKKITEWP (100 aa)) lie on the Cytoplasmic side of the membrane. Residues 87-365 (NVVRKYAKKI…LVLGVLSGEF (279 aa)) form an I repeat. Residues 101 to 119 (PFEYMILATIIANCIVLAL) form a helical membrane-spanning segment. The Extracellular portion of the chain corresponds to 120 to 138 (EQHLPDDDKTPMSERLDDT). A helical transmembrane segment spans residues 139–156 (EPYFIGIFCFEAGIKIVA). The Cytoplasmic portion of the chain corresponds to 157–168 (LGFAFHKGSYLR). A helical membrane pass occupies residues 169–184 (NGWNVMDFVVVLTGIL). Over 185–192 (ATVGTEFD) the chain is Extracellular. A helical transmembrane segment spans residues 193–211 (LRTLRAVRVLRPLKLVSGI). Over 212-230 (PSLQVVLKSIMKAMIPLLQ) the chain is Cytoplasmic. A helical membrane pass occupies residues 231 to 250 (IGLLLFFAILIFAIIGLEFY). Topologically, residues 251–337 (MGKFHTTCFE…NSNDASGNTW (87 aa)) are extracellular. A glycan (N-linked (GlcNAc...) asparagine) is linked at Asn285. A Ca(2+)-binding site is contributed by Glu320. A helical transmembrane segment spans residues 338–362 (NWLYFIPLIIIGSFFMLNLVLGVLS). Residues 363–489 (GEFAKERERV…FYIRRMVKTQ (127 aa)) lie on the Cytoplasmic side of the membrane. Residues 385–402 (QQIERELNGYMEWISKAE) are binding to the beta subunit. Thr411 carries the phosphothreonine modification. Ser450 and Ser453 each carry phosphoserine. One copy of the II repeat lies at 475–719 (ERRMRFYIRR…VFLAIAVDNL (245 aa)). A helical transmembrane segment spans residues 490–509 (AFYWTVLSLVALNTLWLAIV). At 510–523 (HYNQPEWLSDFLYY) the chain is on the extracellular side. Residues 524–543 (AEFIFLGLFMSEMFIKMYGL) form a helical membrane-spanning segment. The Cytoplasmic portion of the chain corresponds to 544 to 551 (GTRPYFHS). Residues 552-570 (SFNCFDCGVIIGSIFEVIW) form a helical membrane-spanning segment. The Extracellular portion of the chain corresponds to 571–580 (AVIKPGTSFG). Residues 581 to 599 (ISVLRALRLLRIFKVTKYW) traverse the membrane as a helical segment. Topologically, residues 600–618 (ASLRNLVVSLLNSMKSIIS) are cytoplasmic. Residues 619 to 638 (LLFLLFLFIVVFALLGMQLF) traverse the membrane as a helical segment. At 639-691 (GGQFNFDEGTPPTNFDTFPAAIMTVFQILTGEDWNEVMYDEIKSQGGVQGGMV) the chain is on the extracellular side. Glu670 is a Ca(2+) binding site. A helical membrane pass occupies residues 692–716 (FSIYFIVLTLFGNYTLLNVFLAIAV). The Cytoplasmic portion of the chain corresponds to 717–1190 (DNLANAQELT…TNPLRRLCHY (474 aa)). Ser752, Ser755, and Ser792 each carry phosphoserine. 4 stretches are compositionally biased toward basic and acidic residues: residues 814 to 824 (PDVKTHLDRPL), 850 to 862 (RPRE…DARR), 871 to 924 (APGR…EGEP), and 932 to 958 (RPGD…RAAD). Disordered stretches follow at residues 814-1117 (PDVK…RKPE) and 1137-1170 (VNKN…KPMP). Phosphoserine occurs at positions 1038, 1042, and 1051. The segment covering 1056–1073 (GNSTNPGPALATNPQNAA) has biased composition (polar residues). Low complexity predominate over residues 1074-1083 (SRRTPNNPGN). Residues 1094–1111 (ENSLIVTNPSSTQPNSAK) show a composition bias toward polar residues. Positions 1153-1163 (KKEEEEADPGE) are enriched in acidic residues. Residues 1182–1465 (NPLRRLCHYI…IFVALIIITF (284 aa)) form an III repeat. Residues 1191–1214 (ILNLRYFEMCILMVIAMSSIALAA) form a helical membrane-spanning segment. The Extracellular segment spans residues 1215–1231 (EDPVQPNAPRNNVLRYF). Residues 1232–1251 (DYVFTGVFTFEMVIKMIDLG) traverse the membrane as a helical segment. Over 1252-1258 (LVLHQGA) the chain is Cytoplasmic. The chain crosses the membrane as a helical span at residues 1259–1282 (YFRDLWNILDFIVVSGALVAFAFT). Residues 1283–1293 (GNSKGKDINTI) lie on the Extracellular side of the membrane. A helical transmembrane segment spans residues 1294 to 1311 (KSLRVLRVLRPLKTIKRL). Residues 1312 to 1330 (PKLKAVFDCVVNSLKNVFN) are Cytoplasmic-facing. The helical transmembrane segment at 1331 to 1350 (ILIVYMLFMFIFAVVAVQLF) threads the bilayer. Residues 1351–1437 (KGKFFHCTDE…QGPSPGYRME (87 aa)) lie on the Extracellular side of the membrane. Residue Glu1411 participates in Ca(2+) binding. Residues 1438 to 1462 (MSIFYVVYFVVFPFFFVNIFVALII) form a helical membrane-spanning segment. Residues 1463–1518 (ITFQEQGDKMMEEYSLEKNERACIDFAISAKPLTRHMPQNKQSFQYRMWQFVVSPP) are Cytoplasmic-facing. The stretch at 1502-1765 (NKQSFQYRMW…LFVAVIMDNF (264 aa)) is one IV repeat. The chain crosses the membrane as a helical span at residues 1519–1537 (FEYTIMAMIALNTIVLMMK). Residues 1538–1551 (FYGASVAYENALRV) lie on the Extracellular side of the membrane. The chain crosses the membrane as a helical span at residues 1552–1573 (FNIVFTSLFSLECVLKVMAFGI). Topologically, residues 1574–1580 (LNYFRDA) are cytoplasmic. Residues 1581–1600 (WNIFDFVTVLGSITDILVTE) traverse the membrane as a helical segment. The Extracellular portion of the chain corresponds to 1601–1607 (FGNNFIN). Asn1607 carries N-linked (GlcNAc...) asparagine glycosylation. A helical membrane pass occupies residues 1608–1626 (LSFLRLFRAARLIKLLRQG). The Cytoplasmic portion of the chain corresponds to 1627 to 1645 (YTIRILLWTFVQSFKALPY). Residues 1646 to 1665 (VCLLIAMLFFIYAIIGMQVF) form a helical membrane-spanning segment. The Extracellular portion of the chain corresponds to 1666–1737 (GNIGIDGEDE…IQKPECGNEF (72 aa)). Residues 1738–1763 (AYFYFVSFIFLCSFLMLNLFVAVIMD) traverse the membrane as a helical segment. Over 1764-2212 (NFEYLTRDSS…EGREHATHRQ (449 aa)) the chain is Cytoplasmic. A Phosphothreonine modification is found at Thr1935. The tract at residues 1940 to 2212 (QRMEPPSPTQ…EGREHATHRQ (273 aa)) is disordered. Composition is skewed to polar residues over residues 1948–1963 (TQEG…STQL) and 1972–1997 (QESS…TGTW). Residues Ser1998, Ser2016, Ser2028, Ser2030, Ser2071, and Ser2091 each carry the phosphoserine modification. The span at 2008 to 2017 (PNSQPNSQSV) shows a compositional bias: polar residues. Basic and acidic residues predominate over residues 2018-2034 (EMREMGTDGYSDSEHYL). Over residues 2064–2073 (LSTISDTSPM) the composition is skewed to polar residues. Composition is skewed to basic and acidic residues over residues 2085 to 2102 (RRLD…ENQR) and 2143 to 2153 (PSKDRDQDRGR). Positions 2154-2172 (PKDRKHRPHHHHHHHHHHP) are enriched in basic residues. The span at 2173-2212 (PAPDRERYAQERPDTGRARAREQRWSRSPSEGREHATHRQ) shows a compositional bias: basic and acidic residues.

Belongs to the calcium channel alpha-1 subunit (TC 1.A.1.11) family. CACNA1A subfamily. Voltage-dependent calcium channels are multisubunit complexes, consisting of alpha-1, alpha-2, beta and delta subunits in a 1:1:1:1 ratio. The channel activity is directed by the pore-forming and voltage-sensitive alpha-1 subunit. In many cases, this subunit is sufficient to generate voltage-sensitive calcium channel activity. The auxiliary subunits beta and alpha-2/delta linked by a disulfide bridge regulate the channel activity. Interacts (via C-terminal CDB motif) with CABP1 in the pre- and postsynaptic membranes. Interacts with the spider omega-agatoxin-IVA (AC P30288). Interacts with TSPOAP1. As to expression, brain specific. Purkinje cells contain predominantly P-type VSCC, the Q-type being a prominent calcium current in cerebellar granule cells. Also found in heart, in kidney distal convoluted tubule (DCT), and in pituitary.

It localises to the cell membrane. It carries out the reaction Ca(2+)(in) = Ca(2+)(out). In terms of biological role, voltage-sensitive calcium channels (VSCC) mediate the entry of calcium ions into excitable cells and are also involved in a variety of calcium-dependent processes, including muscle contraction, hormone or neurotransmitter release, gene expression, cell motility, cell division and cell death. The isoform alpha-1A gives rise to P and/or Q-type calcium currents. P/Q-type calcium channels belong to the 'high-voltage activated' (HVA) group and are specifically blocked by the spider omega-agatoxin-IVA (AC P30288). They are however insensitive to dihydropyridines (DHP). This Rattus norvegicus (Rat) protein is Voltage-dependent P/Q-type calcium channel subunit alpha-1A.